Reading from the N-terminus, the 265-residue chain is Shikimate dehydrogenase (NADP(+)) (265 aa).

Residues 15–17 (SLS) and Thr-62 contribute to the shikimate site. The Proton acceptor role is filled by Lys-66. Shikimate is bound by residues Asn-87 and Asp-102. Residues 125–129 (GAGGA), 149–154 (NRTLEK), and Leu-209 contribute to the NADP(+) site. Tyr-211 is a binding site for shikimate. Gly-233 lines the NADP(+) pocket.

Belongs to the shikimate dehydrogenase family. As to quaternary structure, homodimer.

The enzyme catalyses shikimate + NADP(+) = 3-dehydroshikimate + NADPH + H(+). It functions in the pathway metabolic intermediate biosynthesis; chorismate biosynthesis; chorismate from D-erythrose 4-phosphate and phosphoenolpyruvate: step 4/7. Involved in the biosynthesis of the chorismate, which leads to the biosynthesis of aromatic amino acids. Catalyzes the reversible NADPH linked reduction of 3-dehydroshikimate (DHSA) to yield shikimate (SA). In Legionella pneumophila (strain Corby), this protein is Shikimate dehydrogenase (NADP(+)).